The following is a 195-amino-acid chain: Large ribosomal subunit protein eL15 (195 aa).

The disordered stretch occupies residues 174 to 195 (GHGRLGSAKSRPSIRANGRLRR).

It belongs to the eukaryotic ribosomal protein eL15 family.

The protein is Large ribosomal subunit protein eL15 of Picrophilus torridus (strain ATCC 700027 / DSM 9790 / JCM 10055 / NBRC 100828 / KAW 2/3).